Reading from the N-terminus, the 416-residue chain is Gamma-glutamyl phosphate reductase (416 aa).

This sequence belongs to the gamma-glutamyl phosphate reductase family.

The protein localises to the cytoplasm. The enzyme catalyses L-glutamate 5-semialdehyde + phosphate + NADP(+) = L-glutamyl 5-phosphate + NADPH + H(+). It functions in the pathway amino-acid biosynthesis; L-proline biosynthesis; L-glutamate 5-semialdehyde from L-glutamate: step 2/2. Functionally, catalyzes the NADPH-dependent reduction of L-glutamate 5-phosphate into L-glutamate 5-semialdehyde and phosphate. The product spontaneously undergoes cyclization to form 1-pyrroline-5-carboxylate. This Vibrio vulnificus (strain YJ016) protein is Gamma-glutamyl phosphate reductase.